The chain runs to 30 residues: Cyclotide cter-O (30 aa).

The segment at residues 1–30 (GIPCGESCVFIPCITGIAGCSCKSKVCYRN) is a cross-link (cyclopeptide (Gly-Asn)). 3 disulfides stabilise this stretch: cysteine 4–cysteine 20, cysteine 8–cysteine 22, and cysteine 13–cysteine 27.

This is a cyclic peptide.

The protein localises to the secreted. Probably participates in a plant defense mechanism. This Clitoria ternatea (Butterfly pea) protein is Cyclotide cter-O.